The following is a 215-amino-acid chain: UPF0502 protein YceH (215 aa).

N6-acetyllysine is present on K80.

This sequence belongs to the UPF0502 family.

This chain is UPF0502 protein YceH, found in Shigella boydii serotype 4 (strain Sb227).